We begin with the raw amino-acid sequence, 68 residues long: MKEKIHPKYNTATNVSCACGNTFTVGSTKDSIKVELCAQCHPFYTGEKRMVDTAGRVEKFRQRYGNKT.

Positions 17, 19, 37, and 40 each coordinate Zn(2+).

The protein belongs to the bacterial ribosomal protein bL31 family. Type A subfamily. Part of the 50S ribosomal subunit. The cofactor is Zn(2+).

Binds the 23S rRNA. The sequence is that of Large ribosomal subunit protein bL31 from Dehalococcoides mccartyi (strain ATCC BAA-2266 / KCTC 15142 / 195) (Dehalococcoides ethenogenes (strain 195)).